Consider the following 467-residue polypeptide: UDP-N-acetylmuramate--L-alanine ligase (467 aa).

112–118 is an ATP binding site; sequence GTHGKTT.

This sequence belongs to the MurCDEF family.

It is found in the cytoplasm. The catalysed reaction is UDP-N-acetyl-alpha-D-muramate + L-alanine + ATP = UDP-N-acetyl-alpha-D-muramoyl-L-alanine + ADP + phosphate + H(+). The protein operates within cell wall biogenesis; peptidoglycan biosynthesis. Its function is as follows. Cell wall formation. This Paraburkholderia phytofirmans (strain DSM 17436 / LMG 22146 / PsJN) (Burkholderia phytofirmans) protein is UDP-N-acetylmuramate--L-alanine ligase.